The following is a 328-amino-acid chain: uncharacterized protein (328 aa).

A DNA-binding region (H-T-H motif) is located at residues 72–91 (ALQIRDKFNLQRVIIVPDGE).

The protein belongs to the SorC transcriptional regulatory family.

This is an uncharacterized protein from Escherichia coli (strain K12).